A 1728-amino-acid polypeptide reads, in one-letter code: U3 small nucleolar RNA-associated protein 10 (1728 aa).

7 HEAT repeats span residues 540–578 (DKDF…LVKE), 881–926 (PANH…MMPA), 986–1024 (FMGS…AYEH), 1191–1229 (LLSI…SEST), 1235–1274 (REAL…KYGK), 1622–1662 (ADAT…GQAA), and 1683–1721 (LQAL…KLGE).

The protein belongs to the HEATR1/UTP10 family. Component of the ribosomal small subunit (SSU) processome.

Its subcellular location is the nucleus. The protein localises to the nucleolus. Functionally, involved in nucleolar processing of pre-18S ribosomal RNA. Involved in ribosome biosynthesis. This chain is U3 small nucleolar RNA-associated protein 10, found in Chaetomium globosum (strain ATCC 6205 / CBS 148.51 / DSM 1962 / NBRC 6347 / NRRL 1970) (Soil fungus).